A 294-amino-acid chain; its full sequence is MSDYLVKALAYDGMARVYAAVTTETIKEAQRRHDTWSVSSAALGRTMTGTLFLGAMQKEDQKITVKIEGDGPIGPIVADSNAQGQIRGYVTNPHVHFSELNEAGKLDVRRGVGTSGMLSVVKDLGFGENFTGQTPIVSGEIGEDFTYYLATSEQINSSVGVGVLVNPDDTIEAAGGFMLQLLPGATDEIIDEIEKNLSTLPTVSRMIEAGETPETILAKLAGGEDKLQILEKIPVAFECNCSKERFGSAIISLGKEEIRSMIEEDHGAEAECHFCRNTYDFSEEELEKLYEEAK.

2 disulfides stabilise this stretch: C239/C241 and C272/C275.

This sequence belongs to the HSP33 family. Under oxidizing conditions two disulfide bonds are formed involving the reactive cysteines. Under reducing conditions zinc is bound to the reactive cysteines and the protein is inactive.

The protein localises to the cytoplasm. Its function is as follows. Redox regulated molecular chaperone. Protects both thermally unfolding and oxidatively damaged proteins from irreversible aggregation. Plays an important role in the bacterial defense system toward oxidative stress. The polypeptide is 33 kDa chaperonin (Listeria innocua serovar 6a (strain ATCC BAA-680 / CLIP 11262)).